The primary structure comprises 822 residues: Probable alpha,alpha-trehalose-phosphate synthase [UDP-forming] 2 (822 aa).

The interval 12 to 479 (PRLLVVANRL…GLDFMSELNG (468 aa)) is glycosyltransferase.

In the N-terminal section; belongs to the glycosyltransferase 20 family. The protein in the C-terminal section; belongs to the trehalose phosphatase family.

It carries out the reaction D-glucose 6-phosphate + UDP-alpha-D-glucose = alpha,alpha-trehalose 6-phosphate + UDP + H(+). This Arabidopsis thaliana (Mouse-ear cress) protein is Probable alpha,alpha-trehalose-phosphate synthase [UDP-forming] 2 (TPS2).